Reading from the N-terminus, the 505-residue chain is Histidine ammonia-lyase (505 aa).

Residues 141-143 (ASG) constitute a cross-link (5-imidazolinone (Ala-Gly)). A 2,3-didehydroalanine (Ser) modification is found at Ser142.

This sequence belongs to the PAL/histidase family. Post-translationally, contains an active site 4-methylidene-imidazol-5-one (MIO), which is formed autocatalytically by cyclization and dehydration of residues Ala-Ser-Gly.

It localises to the cytoplasm. It catalyses the reaction L-histidine = trans-urocanate + NH4(+). The protein operates within amino-acid degradation; L-histidine degradation into L-glutamate; N-formimidoyl-L-glutamate from L-histidine: step 1/3. This Bacillus cereus (strain AH187) protein is Histidine ammonia-lyase.